A 293-amino-acid polypeptide reads, in one-letter code: ATP synthase gamma chain (293 aa).

It belongs to the ATPase gamma chain family. F-type ATPases have 2 components, CF(1) - the catalytic core - and CF(0) - the membrane proton channel. CF(1) has five subunits: alpha(3), beta(3), gamma(1), delta(1), epsilon(1). CF(0) has three main subunits: a, b and c.

The protein resides in the cell inner membrane. Produces ATP from ADP in the presence of a proton gradient across the membrane. The gamma chain is believed to be important in regulating ATPase activity and the flow of protons through the CF(0) complex. This Psychrobacter sp. (strain PRwf-1) protein is ATP synthase gamma chain.